A 921-amino-acid polypeptide reads, in one-letter code: Isoleucine--tRNA ligase (921 aa).

The 'HIGH' region motif lies at Pro-59–His-69. Glu-569 serves as a coordination point for L-isoleucyl-5'-AMP. The short motif at Lys-610–Ser-614 is the 'KMSKS' region element. Lys-613 provides a ligand contact to ATP. Residues Cys-894, Cys-897, Cys-909, and Cys-912 each contribute to the Zn(2+) site.

The protein belongs to the class-I aminoacyl-tRNA synthetase family. IleS type 1 subfamily. As to quaternary structure, monomer. Requires Zn(2+) as cofactor.

The protein localises to the cytoplasm. The enzyme catalyses tRNA(Ile) + L-isoleucine + ATP = L-isoleucyl-tRNA(Ile) + AMP + diphosphate. Functionally, catalyzes the attachment of isoleucine to tRNA(Ile). As IleRS can inadvertently accommodate and process structurally similar amino acids such as valine, to avoid such errors it has two additional distinct tRNA(Ile)-dependent editing activities. One activity is designated as 'pretransfer' editing and involves the hydrolysis of activated Val-AMP. The other activity is designated 'posttransfer' editing and involves deacylation of mischarged Val-tRNA(Ile). This is Isoleucine--tRNA ligase from Campylobacter lari (strain RM2100 / D67 / ATCC BAA-1060).